The sequence spans 336 residues: D-alanine--D-alanine ligase (336 aa).

Positions 124-330 (KMWFSALGIP…FTEYLSLVIN (207 aa)) constitute an ATP-grasp domain. Residue 154-209 (ALENWGSIFVKAASQGSSVGCYKVDDSSKVAGVLKDAFGYAPYVIVEKTIKARELE) participates in ATP binding. 3 residues coordinate Mg(2+): Asp284, Glu297, and Asn299.

The protein belongs to the D-alanine--D-alanine ligase family. The cofactor is Mg(2+). Requires Mn(2+) as cofactor.

It localises to the cytoplasm. The catalysed reaction is 2 D-alanine + ATP = D-alanyl-D-alanine + ADP + phosphate + H(+). It participates in cell wall biogenesis; peptidoglycan biosynthesis. In terms of biological role, cell wall formation. The sequence is that of D-alanine--D-alanine ligase from Shewanella sp. (strain MR-4).